The chain runs to 181 residues: RNA pyrophosphohydrolase (181 aa).

One can recognise a Nudix hydrolase domain in the interval 6 to 148; it reads GFRPNVGIIV…KRQVYRQALQ (143 aa). The short motif at 38–59 is the Nudix box element; the sequence is GGVEANETPLEALYRELREEVG.

It belongs to the Nudix hydrolase family. RppH subfamily. The cofactor is a divalent metal cation.

Functionally, accelerates the degradation of transcripts by removing pyrophosphate from the 5'-end of triphosphorylated RNA, leading to a more labile monophosphorylated state that can stimulate subsequent ribonuclease cleavage. The sequence is that of RNA pyrophosphohydrolase from Halorhodospira halophila (strain DSM 244 / SL1) (Ectothiorhodospira halophila (strain DSM 244 / SL1)).